The primary structure comprises 685 residues: DNA ligase (685 aa).

Residues 34–38 (DAVFD), 83–84 (SL), and Glu-113 each bind NAD(+). Lys-115 (N6-AMP-lysine intermediate) is an active-site residue. Arg-136, Glu-173, Lys-297, and Lys-321 together coordinate NAD(+). Zn(2+) is bound by residues Cys-415, Cys-418, Cys-433, and Cys-438. A BRCT domain is found at 607–685 (QEKLQFSGKT…EQELMTLISN (79 aa)).

Belongs to the NAD-dependent DNA ligase family. LigA subfamily. The cofactor is Mg(2+). It depends on Mn(2+) as a cofactor.

It carries out the reaction NAD(+) + (deoxyribonucleotide)n-3'-hydroxyl + 5'-phospho-(deoxyribonucleotide)m = (deoxyribonucleotide)n+m + AMP + beta-nicotinamide D-nucleotide.. In terms of biological role, DNA ligase that catalyzes the formation of phosphodiester linkages between 5'-phosphoryl and 3'-hydroxyl groups in double-stranded DNA using NAD as a coenzyme and as the energy source for the reaction. It is essential for DNA replication and repair of damaged DNA. In Prochlorococcus marinus (strain SARG / CCMP1375 / SS120), this protein is DNA ligase.